A 316-amino-acid polypeptide reads, in one-letter code: Ribosomal RNA small subunit methyltransferase H (316 aa).

Residues 35 to 37 (GGH), D55, F79, D101, and Q108 each bind S-adenosyl-L-methionine.

It belongs to the methyltransferase superfamily. RsmH family.

Its subcellular location is the cytoplasm. It catalyses the reaction cytidine(1402) in 16S rRNA + S-adenosyl-L-methionine = N(4)-methylcytidine(1402) in 16S rRNA + S-adenosyl-L-homocysteine + H(+). In terms of biological role, specifically methylates the N4 position of cytidine in position 1402 (C1402) of 16S rRNA. This Aliivibrio salmonicida (strain LFI1238) (Vibrio salmonicida (strain LFI1238)) protein is Ribosomal RNA small subunit methyltransferase H.